The following is a 260-amino-acid chain: UPF0246 protein Bcep1808_2308 (260 aa).

This sequence belongs to the UPF0246 family.

This Burkholderia vietnamiensis (strain G4 / LMG 22486) (Burkholderia cepacia (strain R1808)) protein is UPF0246 protein Bcep1808_2308.